A 293-amino-acid polypeptide reads, in one-letter code: Histamine N-methyltransferase B (293 aa).

Glu28 is a binding site for substrate. S-adenosyl-L-methionine is bound by residues Gly60, Glu89, Gln94, Ser120, and Ile142. Asn283 is a substrate binding site.

The protein belongs to the class I-like SAM-binding methyltransferase superfamily. HNMT family. As to quaternary structure, monomer.

Its subcellular location is the cytoplasm. The catalysed reaction is histamine + S-adenosyl-L-methionine = N(tau)-methylhistamine + S-adenosyl-L-homocysteine + H(+). Inactivates histamine by N-methylation. Plays an important role in degrading histamine and in regulating the airway response to histamine. The sequence is that of Histamine N-methyltransferase B (hnmt-b) from Xenopus laevis (African clawed frog).